Here is a 79-residue protein sequence, read N- to C-terminus: Cell division topological specificity factor (79 aa).

This sequence belongs to the MinE family.

In terms of biological role, prevents the cell division inhibition by proteins MinC and MinD at internal division sites while permitting inhibition at polar sites. This ensures cell division at the proper site by restricting the formation of a division septum at the midpoint of the long axis of the cell. The polypeptide is Cell division topological specificity factor (Nitratiruptor sp. (strain SB155-2)).